Here is a 309-residue protein sequence, read N- to C-terminus: ADP,ATP carrier protein 1 (309 aa).

Solcar repeat units follow at residues 11-104, 116-208, and 216-302; these read SHFG…IKSL, KWFA…FKPV, and GSFV…LQLI. 5 helical membrane passes run 13–40, 81–105, 114–134, 184–205, and 219–239; these read FGVDFLMGGVSAAIAKTGAAPIERVKLL, TANVLRYFPTQALNFAFKDKIKSLL, YAKWFAGNLFSGGAAGGLSLL, FVPSVLGIIVYRGLYFGLYDSF, and VASFLLGWVITMGASTASYPL. ADP-binding residues include arginine 86 and lysine 98. Arginine 243 lines the ADP pocket. Positions 243–248 are important for transport activity; it reads RRRMMM. Residues 243–248 carry the Nucleotide carrier signature motif motif; sequence RRRMMM. The chain crosses the membrane as a helical span at residues 279–299; that stretch reads CGANIFRGVAAAGVISLYDQL.

The protein belongs to the mitochondrial carrier (TC 2.A.29) family. As to quaternary structure, monomer.

The protein localises to the mitochondrion inner membrane. The enzyme catalyses ADP(in) + ATP(out) = ADP(out) + ATP(in). Its activity is regulated as follows. The matrix-open state (m-state) is inhibited by the membrane-permeable bongkrekic acid (BKA). The cytoplasmic-open state (c-state) is inhibited by the membrane-impermeable toxic inhibitor carboxyatractyloside (CATR). Its function is as follows. ADP:ATP antiporter that mediates import of ADP into the mitochondrial matrix for ATP synthesis, and export of ATP out to fuel the cell. Cycles between the cytoplasmic-open state (c-state) and the matrix-open state (m-state): operates by the alternating access mechanism with a single substrate-binding site intermittently exposed to either the cytosolic (c-state) or matrix (m-state) side of the inner mitochondrial membrane. In Saccharomyces cerevisiae (strain ATCC 204508 / S288c) (Baker's yeast), this protein is ADP,ATP carrier protein 1 (AAC1).